The chain runs to 374 residues: 4-hydroxybenzoate polyprenyltransferase, mitochondrial (374 aa).

The N-terminal 63 residues, 1-63 (MLRLGGAGLV…RALSLSAAAV (63 aa)), are a transit peptide targeting the mitochondrion. Residues 64 to 83 (VNSAPRPLQPYLRLMRLDKP) are Mitochondrial matrix-facing. The helical transmembrane segment at 84–104 (IGTWLLYLPCTWSIGLAADPG) threads the bilayer. Topologically, residues 105–108 (CFPD) are mitochondrial intermembrane. The chain crosses the membrane as a helical span at residues 109–129 (WYMLSLFGTGAILMRGAGCTI). Residues 130–153 (NDMWDRDFDKKVERTANRPIAAGD) lie on the Mitochondrial matrix side of the membrane. The chain crosses the membrane as a helical span at residues 154-174 (ISAFQSFVFLGAQLTLALGVL). Residues 175–176 (LH) are Mitochondrial intermembrane-facing. The helical transmembrane segment at 177 to 197 (LNYYSIAMGAASLLLVVTYPL) threads the bilayer. At 198–200 (MKR) the chain is on the mitochondrial matrix side. The chain crosses the membrane as a helical span at residues 201–221 (VTFWPQLALGLTFNWGALLGW). The Mitochondrial intermembrane portion of the chain corresponds to 222-230 (SAVKGSCDP). A helical transmembrane segment spans residues 231 to 251 (AVCLPLYFSGVMWTLIYDTIY). Residues 252–277 (AHQDKKDDALIGLKSTALLFRENTKQ) lie on the Mitochondrial matrix side of the membrane. The helical transmembrane segment at 278-298 (WLSGFGVAMVGALSLVGASSG) threads the bilayer. Residues 299–300 (QT) are Mitochondrial intermembrane-facing. A helical transmembrane segment spans residues 301–321 (LPYYAAVAAVGAHLAHQIYTV). The Mitochondrial matrix segment spans residues 322-332 (DIHRAEDCWEK). The chain crosses the membrane as a helical span at residues 333–353 (FTSNRTVGLLLFLGIVLGNLY). Residues 354 to 374 (KDKPDETKGVDAVGEESERTS) lie on the Mitochondrial intermembrane side of the membrane.

This sequence belongs to the UbiA prenyltransferase family. The cofactor is Mg(2+).

The protein localises to the mitochondrion inner membrane. It carries out the reaction an all-trans-polyprenyl diphosphate + 4-hydroxybenzoate = a 4-hydroxy-3-(all-trans-polyprenyl)benzoate + diphosphate. It catalyses the reaction all-trans-decaprenyl diphosphate + 4-hydroxybenzoate = 4-hydroxy-3-(all-trans-decaprenyl)benzoate + diphosphate. The catalysed reaction is all-trans-nonaprenyl diphosphate + 4-hydroxybenzoate = 4-hydroxy-3-(all-trans-nonaprenyl)benzoate + diphosphate. It functions in the pathway cofactor biosynthesis; ubiquinone biosynthesis. Its function is as follows. Mediates the second step in the final reaction sequence of coenzyme Q (CoQ) biosynthesis. Catalyzes the prenylation of para-hydroxybenzoate (PHB) with an all-trans polyprenyl group (such as all-trans-nonaprenyl diphosphate). The length of the polyprenyl side chain varies depending on the species, in humans, the side chain is comprised of 10 isoprenyls producing CoQ10 (also known as ubiquinone), whereas rodents predominantly generate CoQ9. However, this specificity is not complete, human tissues have low amounts of CoQ9 and rodent organs contain some CoQ10. Plays a central role in the biosynthesis of CoQ9. CoQ9 is a vital molecule that transports electrons from mitochondrial respiratory chain complexes. CoQs also function as cofactors for uncoupling protein and plays a role as regulator of the extracellularly-induced ceramide-dependent apoptotic pathway. Regulates mitochondrial permeability transition pore (mPTP) opening and ROS production (pivotal events in cell death) in a tissue specific manner. This chain is 4-hydroxybenzoate polyprenyltransferase, mitochondrial, found in Rattus norvegicus (Rat).